We begin with the raw amino-acid sequence, 325 residues long: Elongation factor P--(R)-beta-lysine ligase (325 aa).

76 to 78 serves as a coordination point for substrate; sequence SPE. ATP is bound by residues 100–102 and asparagine 109; that span reads RNE. A substrate-binding site is contributed by tyrosine 118. 244–245 is an ATP binding site; the sequence is EL. Residue glutamate 251 coordinates substrate. Glycine 300 contacts ATP.

This sequence belongs to the class-II aminoacyl-tRNA synthetase family. EpmA subfamily. Homodimer.

The catalysed reaction is D-beta-lysine + L-lysyl-[protein] + ATP = N(6)-((3R)-3,6-diaminohexanoyl)-L-lysyl-[protein] + AMP + diphosphate + H(+). Functionally, with EpmB is involved in the beta-lysylation step of the post-translational modification of translation elongation factor P (EF-P) on 'Lys-34'. Catalyzes the ATP-dependent activation of (R)-beta-lysine produced by EpmB, forming a lysyl-adenylate, from which the beta-lysyl moiety is then transferred to the epsilon-amino group of EF-P 'Lys-34'. This is Elongation factor P--(R)-beta-lysine ligase from Salmonella agona (strain SL483).